The following is a 311-amino-acid chain: Long form salivary protein D7L1 (311 aa).

The first 21 residues, 1–21, serve as a signal peptide directing secretion; it reads MIVTGVLLFILLELFAQGSQA. Cystine bridges form between Cys-37-Cys-73, Cys-69-Cys-128, Cys-178-Cys-211, and Cys-252-Cys-263.

Belongs to the PBP/GOBP family.

The protein localises to the secreted. Modulates blood feeding of female mosquitoes on vertebrate species by binding and sequestering different mediators involved in the host response. Binds leukotriene C4 and U-46619, a stable analog of thromboxane A2. Inhibits agonist-induced platelet aggregation. Exhibits vasodilating activity. This is Long form salivary protein D7L1 from Anopheles gambiae (African malaria mosquito).